Here is a 1737-residue protein sequence, read N- to C-terminus: Complement C4 (1737 aa).

A signal peptide spans 1–19; it reads MRLLWGLAWAFSFFASSLQ. The cysteines at positions 66 and 95 are disulfide-linked. N-linked (GlcNAc...) asparagine glycans are attached at residues asparagine 224 and asparagine 664. Residues cysteine 633 and cysteine 667 are joined by a disulfide bond. Residues 674–677 constitute a propeptide that is removed on maturation; the sequence is RQKR. 3 cysteine pairs are disulfide-bonded: cysteine 700-cysteine 726, cysteine 701-cysteine 733, and cysteine 714-cysteine 734. Residues 700-734 enclose the Anaphylatoxin-like domain; that stretch reads CCQDGMTKLPMARTCEQRAARVPQPACREPFLSCC. Asparagine 743 carries an N-linked (GlcNAc...) asparagine glycan. The isoglutamyl cysteine thioester (Cys-Gln) cross-link spans 1005-1008; the sequence is CAEQ. Asparagine 1323 and asparagine 1386 each carry an N-linked (GlcNAc...) asparagine glycan. Sulfotyrosine is present on residues tyrosine 1412, tyrosine 1414, and tyrosine 1416. The propeptide occupies 1443-1446; sequence RRRR. 5 cysteine pairs are disulfide-bonded: cysteine 1464–cysteine 1528, cysteine 1576–cysteine 1581, cysteine 1588–cysteine 1666, cysteine 1611–cysteine 1735, and cysteine 1711–cysteine 1720. Residues 1588–1735 form the NTR domain; the sequence is CPRQRRSLER…FLQEYSSQGC (148 aa). Tyrosine 1676 carries the sulfotyrosine modification.

In terms of assembly, in absence of complement activation, circulates in blood as a disulfide-linked trimer of an alpha, beta and gamma chain. As to quaternary structure, complement C4b is composed of complement C4b-A, complement C4 beta and complement C4 gamma chains that are associated via disulfide bonds. Non-enzymatic component of the C3 convertase, also named C4bC2b, composed of the serine protease complement C2b (C2), as well as complement C4b. Non-enzymatic component of the C5 convertase, also named C4bC2bC3b, composed of the serine protease complement C2b (C2), complement C3b, as well as complement C4b. Post-translationally, prior to secretion, the single-chain precursor is enzymatically cleaved by plasminogen (PLG) to yield non-identical chains alpha, beta and gamma. During activation of the complement systems, the alpha chain is cleaved into C4a and C4b by different proteases depending on the complement pathway: C4b stays linked to the beta and gamma chains, while C4a is released in the plasma. The alpha chain is cleaved by C1S to generate C4a and C4b following activation by the classical complement system. The alpha chain is cleaved to generate C4a and C4b by MASP2 following activation by the lectin complement system. The alpha chain is cleaved by GZMK to generate C4a and C4b following activation by the GZMK complement system. Further degradation of C4b by C1 into the inactive fragments C4c and C4d blocks the generation of C3 convertase. The proteolytic cleavages often are incomplete so that many structural forms can be found in plasma. In terms of processing, upon activation, the internal thioester bond reacts with carbohydrate antigens on the target surface to form amide or ester bonds, leading to covalent association with the surface of pathogens. Complement C4b interacts with complement C3b via a thioester linkage. Post-translationally, N- and O-glycosylated. O-glycosylated with a core 1 or possibly core 8 glycan.

The protein localises to the secreted. It is found in the cell surface. Its function is as follows. Precursor of non-enzymatic components of the classical, lectin and GZMK complement pathways, which consist in a cascade of proteins that leads to phagocytosis and breakdown of pathogens and signaling that strengthens the adaptive immune system. Functionally, non-enzymatic component of C3 and C5 convertases. Generated following cleavage by complement proteases (C1S, MASP2 or GZMK, depending on the complement pathway), it covalently attaches to the surface of pathogens, where it acts as an opsonin that marks the surface of antigens for removal. It then recruits the serine protease complement C2b to form the C3 and C5 convertases, which cleave and activate C3 and C5, respectively, the next components of the complement pathways. Complement C4b-A isotype is responsible for effective binding to form amide bonds with immune aggregates or protein antigens, while complement C4b-B isotype catalyzes the transacylation of the thioester carbonyl group to form ester bonds with carbohydrate antigens. Putative humoral mediator released following cleavage by complement proteases (C1S, MASP2 or GZMK, depending on the complement pathway). While it is strongly similar to anaphylatoxins, its role is unclear. Was reported to act as a mediator of local inflammatory process; however these effects were probably due to contamination with C3a and/C5a anaphylatoxins in biological assays. The chain is Complement C4 from Rattus norvegicus (Rat).